Consider the following 96-residue polypeptide: MKLRPLHDRVIIKRTEVEAKSAGGIVLTGSAAEKSTRGEIVAVGKGRILDNGEVRALDVKAGDKVLFNEGYGVKTEKIDGEEYLIMSESDILAVEE.

Belongs to the GroES chaperonin family. In terms of assembly, heptamer of 7 subunits arranged in a ring. Interacts with the chaperonin GroEL.

It localises to the cytoplasm. Its function is as follows. Together with the chaperonin GroEL, plays an essential role in assisting protein folding. The GroEL-GroES system forms a nano-cage that allows encapsulation of the non-native substrate proteins and provides a physical environment optimized to promote and accelerate protein folding. GroES binds to the apical surface of the GroEL ring, thereby capping the opening of the GroEL channel. The protein is Co-chaperonin GroES of Idiomarina loihiensis (strain ATCC BAA-735 / DSM 15497 / L2-TR).